We begin with the raw amino-acid sequence, 353 residues long: Photosystem II D2 protein (353 aa).

An N-acetylthreonine modification is found at threonine 2. Phosphothreonine is present on threonine 2. Residues 41 to 61 traverse the membrane as a helical segment; it reads CAYFALGGWFTGTTFVTSWYT. Residue histidine 118 coordinates chlorophyll a. A helical membrane pass occupies residues 125 to 141; that stretch reads GFMLRQFELARSVQLRP. 2 residues coordinate pheophytin a: glutamine 130 and asparagine 143. A helical membrane pass occupies residues 153-166; the sequence is VFVSVFLIYPLGQS. Histidine 198 contacts chlorophyll a. The helical transmembrane segment at 208–228 threads the bilayer; the sequence is AALLCAIHGATVENTLFEDGD. Positions 215 and 262 each coordinate a plastoquinone. Position 215 (histidine 215) interacts with Fe cation. Position 269 (histidine 269) interacts with Fe cation. The helical transmembrane segment at 279 to 295 threads the bilayer; that stretch reads GLWMSAIGVVGLALNLR.

This sequence belongs to the reaction center PufL/M/PsbA/D family. In terms of assembly, PSII is composed of 1 copy each of membrane proteins PsbA, PsbB, PsbC, PsbD, PsbE, PsbF, PsbH, PsbI, PsbJ, PsbK, PsbL, PsbM, PsbT, PsbX, PsbY, PsbZ, Psb30/Ycf12, at least 3 peripheral proteins of the oxygen-evolving complex and a large number of cofactors. It forms dimeric complexes. It depends on The D1/D2 heterodimer binds P680, chlorophylls that are the primary electron donor of PSII, and subsequent electron acceptors. It shares a non-heme iron and each subunit binds pheophytin, quinone, additional chlorophylls, carotenoids and lipids. There is also a Cl(-1) ion associated with D1 and D2, which is required for oxygen evolution. The PSII complex binds additional chlorophylls, carotenoids and specific lipids. as a cofactor.

It is found in the plastid. Its subcellular location is the chloroplast thylakoid membrane. The enzyme catalyses 2 a plastoquinone + 4 hnu + 2 H2O = 2 a plastoquinol + O2. Photosystem II (PSII) is a light-driven water:plastoquinone oxidoreductase that uses light energy to abstract electrons from H(2)O, generating O(2) and a proton gradient subsequently used for ATP formation. It consists of a core antenna complex that captures photons, and an electron transfer chain that converts photonic excitation into a charge separation. The D1/D2 (PsbA/PsbD) reaction center heterodimer binds P680, the primary electron donor of PSII as well as several subsequent electron acceptors. D2 is needed for assembly of a stable PSII complex. The protein is Photosystem II D2 protein of Welwitschia mirabilis (Tree tumbo).